Here is a 469-residue protein sequence, read N- to C-terminus: UDP-N-acetylmuramate--L-alanine ligase (469 aa).

Position 118 to 124 (118 to 124 (GTHGKTT)) interacts with ATP.

This sequence belongs to the MurCDEF family.

It localises to the cytoplasm. The enzyme catalyses UDP-N-acetyl-alpha-D-muramate + L-alanine + ATP = UDP-N-acetyl-alpha-D-muramoyl-L-alanine + ADP + phosphate + H(+). It functions in the pathway cell wall biogenesis; peptidoglycan biosynthesis. Cell wall formation. This chain is UDP-N-acetylmuramate--L-alanine ligase, found in Ruegeria sp. (strain TM1040) (Silicibacter sp.).